The sequence spans 894 residues: Desmocollin-1 (894 aa).

A signal peptide spans 1-29 (MALASAAPGSIFCKQLLFSLLVLTLLCDA). Positions 30–134 (CQKVYLRVPS…KDTALKRSKR (105 aa)) are excised as a propeptide. Cadherin domains are found at residues 135 to 242 (RWAP…APYF), 243 to 354 (EHRV…PPSF), 355 to 471 (TETS…GPEC), 472 to 575 (HPPV…DHAP), and 576 to 682 (QIDK…STRD). Residues 135–691 (RWAPIPASLM…DVRPNVILGR (557 aa)) are Extracellular-facing. The N-linked (GlcNAc...) asparagine glycan is linked to Asn-165. Thr-385 bears the Phosphothreonine mark. Asn-546 is a glycosylation site (N-linked (GlcNAc...) asparagine). Residues 692 to 714 (WAILAMVLGSVLLLCILFTCFCV) traverse the membrane as a helical segment. Over 715–894 (TAKRTVKKCF…RTLAKTCIKK (180 aa)) the chain is Cytoplasmic.

As to quaternary structure, binds to JUP/plakoglobin. As to expression, strongly expressed in epidermis, less in lymph node and tongue.

It localises to the cell membrane. The protein resides in the cell junction. Its subcellular location is the desmosome. A component of desmosome cell-cell junctions which are required for positive regulation of cellular adhesion. Required for desmosome adhesion strength between the granular layers of the epidermis, as a result moderates epidermal proliferation and differentiation. Is therefore required to maintain postnatal epidermal barrier function and normal hair follicle morphology into adulthood. The sequence is that of Desmocollin-1 (DSC1) from Homo sapiens (Human).